The chain runs to 901 residues: Glutamate receptor 2.1 (901 aa).

An N-terminal signal peptide occupies residues 1 to 25; sequence MKRENNLVLSLLFFVIVFLMQVGEA. Topologically, residues 26 to 574 are extracellular; it reads QNRITNVNVG…SSTIFLMPLT (549 aa). 9 N-linked (GlcNAc...) asparagine glycosylation sites follow: N46, N53, N204, N267, N331, N342, N461, N477, and N536. Residues 575-595 traverse the membrane as a helical segment; that stretch reads LALWLISLLSFFIIGLVVWVL. The Cytoplasmic portion of the chain corresponds to 596–604; it reads EHRVNPDFD. The helical transmembrane segment at 605 to 625 threads the bilayer; it reads GPGQYQLSTIFWFSFSIMVFA. At 626-629 the chain is on the cytoplasmic side; sequence PRER. The helical transmembrane segment at 630 to 650 threads the bilayer; it reads VLSFWARVVVIIWYFLVLVLT. Residues 651–823 lie on the Extracellular side of the membrane; that stretch reads QSYTASLASL…VSFRQLGFDS (173 aa). The helical transmembrane segment at 824 to 844 threads the bilayer; the sequence is FWVLFLVAAIVCTMALLKFVY. Residues 845 to 901 are Cytoplasmic-facing; the sequence is QFLKENPNQRNLRVLWEKFNEPDQKSYIKDVTKCQCSSGQGMPKNGQEGANAVNNGN.

This sequence belongs to the glutamate-gated ion channel (TC 1.A.10.1) family. In terms of assembly, may form heteromers. In terms of tissue distribution, expressed predominantly in roots. First strongly detected in all cell types of the root except at the apex. Later expressed at the root-shoot junction.

The protein localises to the membrane. In terms of biological role, glutamate-gated receptor that probably acts as a non-selective cation channel. May be involved in light-signal transduction and calcium homeostasis via the regulation of calcium influx into cells. This chain is Glutamate receptor 2.1 (GLR2.1), found in Arabidopsis thaliana (Mouse-ear cress).